A 455-amino-acid chain; its full sequence is MKKSRGLSDYLWAWTLILSTLSGRSYGQPSQDELKDNTTVFTRILDRLLDGYDNRLRPGLGERVTEVKTDIFVTSFGPVSDHDMEYTIDVFFRQSWKDERLKFKGPMTVLRLNNLMASKIWTPDTFFHNGKKSVAHNMTMPNKLLRITEDGTLLYTMRLTVRAECPMHLEDFPMDAHACPLKFGSYAYTRAEVVYEWTREPARSVVVAEDGSRLNQYDLLGQTVDSGIVQSSTGEYVVMTTHFHLKRKIGYFVIQTYLPCIMTVILSQVSFWLNRESVPARTVFGVTTVLTMTTLSISARNSLPKVAYATAMDWFIAVCYAFVFSALIEFATVNYFTKRGYAWDGKSVVPEKPKKVKDPLIKKNNTYAPTATSYTPNLARGDPGLATIAKSATIEPKEVKPETKPPEPKKTFNSVSKIDRLSRIAFPLLFGIFNLVYWATYLNREPQLKAPTPHQ.

The signal sequence occupies residues 1–27 (MKKSRGLSDYLWAWTLILSTLSGRSYG). Topologically, residues 28-252 (QPSQDELKDN…FHLKRKIGYF (225 aa)) are extracellular. Asn-37 carries an N-linked (GlcNAc...) asparagine glycan. Arg-93 is a 4-aminobutanoate binding site. An N-linked (GlcNAc...) asparagine glycan is attached at Asn-137. Thr-156 is a binding site for 4-aminobutanoate. The cysteines at positions 165 and 179 are disulfide-linked. The chain crosses the membrane as a helical span at residues 253 to 273 (VIQTYLPCIMTVILSQVSFWL). The Cytoplasmic segment spans residues 274–278 (NRESV). A helical transmembrane segment spans residues 279–300 (PARTVFGVTTVLTMTTLSISAR). The Extracellular portion of the chain corresponds to 301 to 310 (NSLPKVAYAT). The helical transmembrane segment at 311 to 332 (AMDWFIAVCYAFVFSALIEFAT) threads the bilayer. Residues 333–420 (VNYFTKRGYA…TFNSVSKIDR (88 aa)) lie on the Cytoplasmic side of the membrane. A helical membrane pass occupies residues 421-440 (LSRIAFPLLFGIFNLVYWAT). The Extracellular segment spans residues 441 to 455 (YLNREPQLKAPTPHQ).

It belongs to the ligand-gated ion channel (TC 1.A.9) family. Gamma-aminobutyric acid receptor (TC 1.A.9.5) subfamily. GABRA1 sub-subfamily. In terms of assembly, heteropentamer, formed by a combination of alpha (GABRA1-6), beta (GABRB1-3), gamma (GABRG1-3), delta (GABRD), epsilon (GABRE), rho (GABRR1-3), pi (GABRP) and theta (GABRQ) subunits, each subunit exhibiting distinct physiological and pharmacological properties. Interacts with UBQLN1. Interacts with TRAK1. Interacts with KIF21B. Identified in a complex of 720 kDa composed of LHFPL4, NLGN2, GABRA1, GABRB2, GABRG2 and GABRB3. Interacts with LHFPL4. Interacts with NLGN2. Interacts with SHISA7; interaction leads to the regulation of GABA(A) receptor trafficking, channel deactivation kinetics and pharmacology. Post-translationally, glycosylated. In terms of tissue distribution, expressed in the cerebellum.

It is found in the postsynaptic cell membrane. Its subcellular location is the cell membrane. It localises to the cytoplasmic vesicle membrane. It catalyses the reaction chloride(in) = chloride(out). Its activity is regulated as follows. Allosterically activated by benzodiazepines, the neuroanesthetic alphaxalone and pentobarbital. Inhibited by the antagonist bicuculline. Potentiated by histamine. In terms of biological role, alpha subunit of the heteropentameric ligand-gated chloride channel gated by Gamma-aminobutyric acid (GABA), a major inhibitory neurotransmitter in the brain. GABA-gated chloride channels, also named GABA(A) receptors (GABAAR), consist of five subunits arranged around a central pore and contain GABA active binding site(s) located at the alpha and beta subunit interface(s). When activated by GABA, GABAARs selectively allow the flow of chloride anions across the cell membrane down their electrochemical gradient. Alpha-1/GABRA1-containing GABAARs are largely synaptic. Chloride influx into the postsynaptic neuron following GABAAR opening decreases the neuron ability to generate a new action potential, thereby reducing nerve transmission. GABAARs containing alpha-1 and beta-2 or -3 subunits exhibit synaptogenic activity; the gamma-2 subunit being necessary but not sufficient to induce rapid synaptic contacts formation. GABAARs function also as histamine receptor where histamine binds at the interface of two neighboring beta subunits and potentiates GABA response. GABAARs containing alpha, beta and epsilon subunits also permit spontaneous chloride channel activity while preserving the structural information required for GABA-gated openings. Alpha-1-mediated plasticity in the orbitofrontal cortex regulates context-dependent action selection. Together with rho subunits, may also control neuronal and glial GABAergic transmission in the cerebellum. In Mus musculus (Mouse), this protein is Gamma-aminobutyric acid receptor subunit alpha-1.